The primary structure comprises 172 residues: Signal peptidase complex catalytic subunit SEC11 (172 aa).

Residues methionine 1–glutamine 14 are Cytoplasmic-facing. Residues leucine 15–alanine 35 traverse the membrane as a helical; Signal-anchor for type II membrane protein segment. Over threonine 36–glutamate 172 the chain is Lumenal. Catalysis depends on charge relay system residues serine 49, histidine 90, and aspartate 115. The C-terminal short (CTS) helix stretch occupies residues alanine 158 to leucine 169.

Belongs to the peptidase S26B family. In terms of assembly, component of the signal peptidase complex (SPC) composed of a catalytic subunit SEC11 and three accessory subunits SPC1, SPC2 and SPC3. The complex induces a local thinning of the ER membrane which is used to measure the length of the signal peptide (SP) h-region of protein substrates. This ensures the selectivity of the complex towards h-regions shorter than 18-20 amino acids. SPC associates with the translocon complex.

The protein resides in the endoplasmic reticulum membrane. It carries out the reaction Cleavage of hydrophobic, N-terminal signal or leader sequences from secreted and periplasmic proteins.. In terms of biological role, catalytic component of the signal peptidase complex (SPC) which catalyzes the cleavage of N-terminal signal sequences from nascent proteins as they are translocated into the lumen of the endoplasmic reticulum. Specifically cleaves N-terminal signal peptides that contain a hydrophobic alpha-helix (h-region) shorter than 18-20 amino acids. This is Signal peptidase complex catalytic subunit SEC11 (SEC11) from Pyricularia oryzae (strain 70-15 / ATCC MYA-4617 / FGSC 8958) (Rice blast fungus).